Consider the following 78-residue polypeptide: RNA-binding protein Hfq (78 aa).

Residues 9–69 (DHFLNQLRKE…ISTFAPQRNV (61 aa)) enclose the Sm domain.

The protein belongs to the Hfq family. As to quaternary structure, homohexamer.

Its function is as follows. RNA chaperone that binds small regulatory RNA (sRNAs) and mRNAs to facilitate mRNA translational regulation in response to envelope stress, environmental stress and changes in metabolite concentrations. Also binds with high specificity to tRNAs. This Halalkalibacterium halodurans (strain ATCC BAA-125 / DSM 18197 / FERM 7344 / JCM 9153 / C-125) (Bacillus halodurans) protein is RNA-binding protein Hfq.